The chain runs to 118 residues: 5-hydroxyisourate hydrolase (118 aa).

His7, Arg46, and Tyr115 together coordinate substrate.

It belongs to the transthyretin family. 5-hydroxyisourate hydrolase subfamily. Homotetramer.

The enzyme catalyses 5-hydroxyisourate + H2O = 5-hydroxy-2-oxo-4-ureido-2,5-dihydro-1H-imidazole-5-carboxylate + H(+). Functionally, catalyzes the hydrolysis of 5-hydroxyisourate (HIU) to 2-oxo-4-hydroxy-4-carboxy-5-ureidoimidazoline (OHCU). The polypeptide is 5-hydroxyisourate hydrolase (Brucella melitensis biotype 1 (strain ATCC 23456 / CCUG 17765 / NCTC 10094 / 16M)).